Here is a 356-residue protein sequence, read N- to C-terminus: sn-glycerol-3-phosphate import ATP-binding protein UgpC (356 aa).

The ABC transporter domain maps to 4-235 (LKLQAVTKSW…PASLFVASFI (232 aa)). ATP is bound at residue 37 to 44 (GPSGCGKS).

This sequence belongs to the ABC transporter superfamily. sn-glycerol-3-phosphate importer (TC 3.A.1.1.3) family. The complex is composed of two ATP-binding proteins (UgpC), two transmembrane proteins (UgpA and UgpE) and a solute-binding protein (UgpB).

The protein resides in the cell inner membrane. It carries out the reaction sn-glycerol 3-phosphate(out) + ATP + H2O = sn-glycerol 3-phosphate(in) + ADP + phosphate + H(+). Part of the ABC transporter complex UgpBAEC involved in sn-glycerol-3-phosphate (G3P) import. Responsible for energy coupling to the transport system. The protein is sn-glycerol-3-phosphate import ATP-binding protein UgpC of Escherichia coli O6:H1 (strain CFT073 / ATCC 700928 / UPEC).